Reading from the N-terminus, the 447-residue chain is MPRMFGTDGVRGVANTEDLSPELAFALGRAAATLARERSGGRVVGVIGRDTRRSGPMLAAALSAGICSAGGDVVDLGVITTPGVAYVTTHLKADFGVMISASHNPAPDNGIKFFSGDGYKLPDEVEDQLEALVKARPDTMPRPTGAELGSIRQSPEAVEAYVEHLVSTGSPLSGLRVVVDCGHGAAYRLSPEVLRRLGAEVIALNTAPDGLNINAGCGSTHPEALQEAVRAHGADAGIAHDGDADRCIAVDERGELVDGDQIMAICALDLKARGQLPNDTLVTTVMSNMGLEMLMRRHGIRLVRTKVGDRYVLEEMLKGGHGLGGEQSGHVIFGALSTTGDGILTAVQLLSIVAREKQPLSTLAGRMQRLPQWLENVRVGRKEGWEQNQAIQAAIARAEAEMAGQGRVLVRASGTEPLIRVMLEGTDMAHIQRLAASIAEVIRTELQ.

The active-site Phosphoserine intermediate is the serine 102. Positions 102, 241, 243, and 245 each coordinate Mg(2+). Serine 102 carries the post-translational modification Phosphoserine.

It belongs to the phosphohexose mutase family. The cofactor is Mg(2+). Activated by phosphorylation.

The catalysed reaction is alpha-D-glucosamine 1-phosphate = D-glucosamine 6-phosphate. In terms of biological role, catalyzes the conversion of glucosamine-6-phosphate to glucosamine-1-phosphate. The sequence is that of Phosphoglucosamine mutase from Symbiobacterium thermophilum (strain DSM 24528 / JCM 14929 / IAM 14863 / T).